The chain runs to 369 residues: Mitogen-activated protein kinase 11 (369 aa).

In terms of domain architecture, Protein kinase spans 40–326 (VPPLRPIGRG…VDEALCHPYL (287 aa)). Residues 46–54 (IGRGASGIV) and K69 each bind ATP. D166 functions as the Proton acceptor in the catalytic mechanism. T198 bears the Phosphothreonine mark. Positions 198–200 (TEY) match the TXY motif. Y200 is modified (phosphotyrosine). Position 203 is a phosphothreonine (T203).

This sequence belongs to the protein kinase superfamily. CMGC Ser/Thr protein kinase family. MAP kinase subfamily. In terms of assembly, interacts with MKK1, MKK2 and MKK6. Post-translationally, dually phosphorylated on Thr-198 and Tyr-200, which activates the enzyme.

The enzyme catalyses L-seryl-[protein] + ATP = O-phospho-L-seryl-[protein] + ADP + H(+). It catalyses the reaction L-threonyl-[protein] + ATP = O-phospho-L-threonyl-[protein] + ADP + H(+). With respect to regulation, activated by threonine and tyrosine phosphorylation. In Arabidopsis thaliana (Mouse-ear cress), this protein is Mitogen-activated protein kinase 11 (MPK11).